The primary structure comprises 120 residues: MFKKVDKKASRTKRHLRVRKKVFGTPDRPRLSVFRSEKNIYVQIIDDVNAVTIVAASSLDKEFSTNNGGNKEGAKLVGAAVAKKAIEKGITEVVFDRGGYVYHGRVQELAEGAREAGLKF.

Belongs to the universal ribosomal protein uL18 family. In terms of assembly, part of the 50S ribosomal subunit; part of the 5S rRNA/L5/L18/L25 subcomplex. Contacts the 5S and 23S rRNAs.

Functionally, this is one of the proteins that bind and probably mediate the attachment of the 5S RNA into the large ribosomal subunit, where it forms part of the central protuberance. This Clostridium botulinum (strain Eklund 17B / Type B) protein is Large ribosomal subunit protein uL18.